The primary structure comprises 395 residues: Chaperone protein DnaJ 2 (395 aa).

Residues 10–75 enclose the J domain; it reads NYYADLGVSS…KKRKEYDELK (66 aa). The CR-type zinc-finger motif lies at 165 to 242; that stretch reads GTTIPVELTG…CHGRGTVRKS (78 aa). Zn(2+)-binding residues include Cys-178, Cys-181, Cys-194, Cys-197, Cys-216, Cys-219, Cys-230, and Cys-233. CXXCXGXG motif repeat units lie at residues 178–185, 194–201, 216–223, and 230–237; these read CNTCHGSG, CGTCDGTG, CATCGGTG, and CDNCHGRG.

Belongs to the DnaJ family. In terms of assembly, homodimer. It depends on Zn(2+) as a cofactor.

The protein resides in the cytoplasm. Participates actively in the response to hyperosmotic and heat shock by preventing the aggregation of stress-denatured proteins and by disaggregating proteins, also in an autonomous, DnaK-independent fashion. Unfolded proteins bind initially to DnaJ; upon interaction with the DnaJ-bound protein, DnaK hydrolyzes its bound ATP, resulting in the formation of a stable complex. GrpE releases ADP from DnaK; ATP binding to DnaK triggers the release of the substrate protein, thus completing the reaction cycle. Several rounds of ATP-dependent interactions between DnaJ, DnaK and GrpE are required for fully efficient folding. Also involved, together with DnaK and GrpE, in the DNA replication of plasmids through activation of initiation proteins. The protein is Chaperone protein DnaJ 2 of Corynebacterium glutamicum (strain ATCC 13032 / DSM 20300 / JCM 1318 / BCRC 11384 / CCUG 27702 / LMG 3730 / NBRC 12168 / NCIMB 10025 / NRRL B-2784 / 534).